We begin with the raw amino-acid sequence, 126 residues long: Large ribosomal subunit protein mL55 (126 aa).

Residues methionine 1–alanine 34 constitute a mitochondrion transit peptide. Serine 86 carries the phosphoserine modification.

Belongs to the mitochondrion-specific ribosomal protein mL55 family. As to quaternary structure, component of the mitochondrial ribosome large subunit (39S) which comprises a 16S rRNA and about 50 distinct proteins.

The protein localises to the mitochondrion. In Bos taurus (Bovine), this protein is Large ribosomal subunit protein mL55 (MRPL55).